Here is a 253-residue protein sequence, read N- to C-terminus: Coenzyme F420:L-glutamate ligase (253 aa).

GTP is bound by residues 9 to 12, 38 to 39, and lysine 43; these read LPEI and ST. Aspartate 113 is a binding site for a divalent metal cation. Asparagine 116 provides a ligand contact to GTP. A divalent metal cation-binding residues include aspartate 148, threonine 149, and glutamate 206. 204-211 contributes to the GTP binding site; it reads AGEGDDGT.

The protein belongs to the CofE family. In terms of assembly, homodimer. The cofactor is Mg(2+). Mn(2+) is required as a cofactor. It depends on K(+) as a cofactor.

It carries out the reaction oxidized coenzyme F420-0 + GTP + L-glutamate = oxidized coenzyme F420-1 + GDP + phosphate + H(+). It catalyses the reaction oxidized coenzyme F420-1 + GTP + L-glutamate = oxidized coenzyme F420-2 + GDP + phosphate + H(+). It participates in cofactor biosynthesis; coenzyme F420 biosynthesis. Catalyzes the GTP-dependent successive addition of two or more gamma-linked L-glutamates to the L-lactyl phosphodiester of 7,8-didemethyl-8-hydroxy-5-deazariboflavin (F420-0) to form coenzyme F420-0-glutamyl-glutamate (F420-2) or polyglutamated F420 derivatives. This Natronomonas pharaonis (strain ATCC 35678 / DSM 2160 / CIP 103997 / JCM 8858 / NBRC 14720 / NCIMB 2260 / Gabara) (Halobacterium pharaonis) protein is Coenzyme F420:L-glutamate ligase.